The sequence spans 21 residues: YQRXSRYYYYXGPPDDIDDRY.

Over residues 1–14 the composition is skewed to low complexity; that stretch reads YQRXSRYYYYXGPP. A disordered region spans residues 1 to 21; it reads YQRXSRYYYYXGPPDDIDDRY.

It belongs to the N16 matrix protein family. Homooligomer; disulfide-linked. May also be disulfide-linked to insoluble organic matrix. Post-translationally, according to PubMed:11250534, amino acids 4 and 11 may be sulfated or phosphorylated. By similarity with the N14 matrix protein, amino-acid 4 may be a cysteine involved in a disulfide bond. Component of conchiolin, the organic matrix of nacre. Is dispersed in calcium carbonate and also linked by disulfide bonds to the organic core of nacre.

The protein localises to the secreted. Its subcellular location is the extracellular space. It localises to the extracellular matrix. May be specifically involved in the formation of the nacreous layer. The protein is Conchiolin protein p20 of Pinctada maxima (Silver-lipped pearl oyster).